Consider the following 249-residue polypeptide: Protein YIP5 (249 aa).

Transmembrane regions (helical) follow at residues 87–107 (LYGPFWITTTVIQALFFSNSI), 131–151 (ASIIYGYTTIIAVLLWGILVW), 164–184 (LYGYANIVWLPVSLATPPFGL), 188–208 (LASHIVKYVLTGIGLLISIVF), and 228–248 (LLFGIIVFHCLLALSLQLIFF).

This sequence belongs to the YIP1 family. In terms of assembly, interacts with the YIP1 family members yip1 and yip4, and several Rab GTPases. The C-terminal cysteines in the Rab GTPase ypt2 are essential for the interaction. Interacts with snx3.

It localises to the membrane. Functionally, possible role in vesicle-mediated transport. May be involved in proper membrane localization of Rab GTPases. This chain is Protein YIP5, found in Schizosaccharomyces pombe (strain 972 / ATCC 24843) (Fission yeast).